Here is a 355-residue protein sequence, read N- to C-terminus: Peptide chain release factor 1 (355 aa).

The residue at position 231 (Q231) is an N5-methylglutamine. The disordered stretch occupies residues 283–303; it reads NAQNKEARKTQVGSGDRSERI.

Belongs to the prokaryotic/mitochondrial release factor family. Post-translationally, methylated by PrmC. Methylation increases the termination efficiency of RF1.

The protein resides in the cytoplasm. Peptide chain release factor 1 directs the termination of translation in response to the peptide chain termination codons UAG and UAA. The sequence is that of Peptide chain release factor 1 from Helicobacter hepaticus (strain ATCC 51449 / 3B1).